We begin with the raw amino-acid sequence, 280 residues long: Cycloeucalenol cycloisomerase (280 aa).

6 helical membrane-spanning segments follow: residues 22-42 (LFFLFYTPFWLTLCLGIVVPY), 53-73 (YLLLALVSAVPAFVIPMLLVG), 89-109 (ANLWIIVFSYVGNYFWTHYFF), 167-187 (FEAAWILALSYFIAYLETIAI), 201-221 (MYRVGCLFYAIYFIVSFPMFF), and 244-264 (AMLVTIILDLWRLFLGPIVPL).

It is found in the membrane. It catalyses the reaction cycloeucalenol = obtusifoliol. Its function is as follows. Converts pentacyclic cyclopropyl sterols to tetracyclic sterols. The polypeptide is Cycloeucalenol cycloisomerase (CPI1) (Arabidopsis thaliana (Mouse-ear cress)).